The primary structure comprises 153 residues: Aspartate carbamoyltransferase regulatory chain (153 aa).

Zn(2+) is bound by residues Cys109, Cys114, Cys138, and Cys141.

The protein belongs to the PyrI family. In terms of assembly, contains catalytic and regulatory chains. It depends on Zn(2+) as a cofactor.

Functionally, involved in allosteric regulation of aspartate carbamoyltransferase. This is Aspartate carbamoyltransferase regulatory chain from Salmonella arizonae (strain ATCC BAA-731 / CDC346-86 / RSK2980).